A 209-amino-acid chain; its full sequence is Large ribosomal subunit protein uL3 (209 aa).

A disordered region spans residues 127–151; sequence SGGPSSHGSKFHRHLGGTGQATTPA.

It belongs to the universal ribosomal protein uL3 family. Part of the 50S ribosomal subunit. Forms a cluster with proteins L14 and L19.

Functionally, one of the primary rRNA binding proteins, it binds directly near the 3'-end of the 23S rRNA, where it nucleates assembly of the 50S subunit. This is Large ribosomal subunit protein uL3 from Borrelia duttonii (strain Ly).